Reading from the N-terminus, the 267-residue chain is Ribosomal RNA small subunit methyltransferase A (267 aa).

Residues asparagine 18, leucine 20, glycine 45, glutamate 66, aspartate 91, and asparagine 112 each contribute to the S-adenosyl-L-methionine site.

Belongs to the class I-like SAM-binding methyltransferase superfamily. rRNA adenine N(6)-methyltransferase family. RsmA subfamily.

It localises to the cytoplasm. It carries out the reaction adenosine(1518)/adenosine(1519) in 16S rRNA + 4 S-adenosyl-L-methionine = N(6)-dimethyladenosine(1518)/N(6)-dimethyladenosine(1519) in 16S rRNA + 4 S-adenosyl-L-homocysteine + 4 H(+). Its function is as follows. Specifically dimethylates two adjacent adenosines (A1518 and A1519) in the loop of a conserved hairpin near the 3'-end of 16S rRNA in the 30S particle. May play a critical role in biogenesis of 30S subunits. In Shewanella amazonensis (strain ATCC BAA-1098 / SB2B), this protein is Ribosomal RNA small subunit methyltransferase A.